Here is a 481-residue protein sequence, read N- to C-terminus: MTQYTLKQAGSLLQSKQISAVELASAYLAAIAEKNPALNGYITIDQDKTLAEARAADERIAQGNASALTGVPVAYKDIFCQTGWRSACASKMLDNFIFPYTATVVQNLLDEGMVTLGRTNMDEFAMGSTNENSFYGAAKNPWNPEHVPGGSSGGSAAVVAARLAPAALGSDTGGSIRQPASHCGITGIKPTYGTVSRFGMVAYASSFDQAGPMAQTAEDCAILLNAMAGFDPKDSTSFEREKEDYTRDLDKPLKGVKIGLPKEYFSEGNSTDVQTALQNTIDLLKAQGAELVEVSLPQTKLSIPAYYVLASAEAGTNLSRYDGVRYGHRAAQFGDLEEMYGKTRAEGFGSEVKRRIMIGTYVLSHGYYDAYYLKAQKLRRLVADDFQTAFARCDLILAPTAPSAAPKIGADTSPVETYLSDIYTIAVNLAGLPALTLPAGFSGGGLPVGVQLVGNYFAEAKILGAAHQIQLNSDWHGKRPE.

Active-site charge relay system residues include Lys76 and Ser151. Ser175 functions as the Acyl-ester intermediate in the catalytic mechanism.

The protein belongs to the amidase family. GatA subfamily. As to quaternary structure, heterotrimer of A, B and C subunits.

The enzyme catalyses L-glutamyl-tRNA(Gln) + L-glutamine + ATP + H2O = L-glutaminyl-tRNA(Gln) + L-glutamate + ADP + phosphate + H(+). Allows the formation of correctly charged Gln-tRNA(Gln) through the transamidation of misacylated Glu-tRNA(Gln) in organisms which lack glutaminyl-tRNA synthetase. The reaction takes place in the presence of glutamine and ATP through an activated gamma-phospho-Glu-tRNA(Gln). The protein is Glutamyl-tRNA(Gln) amidotransferase subunit A of Neisseria gonorrhoeae (strain ATCC 700825 / FA 1090).